A 191-amino-acid polypeptide reads, in one-letter code: Putative zinc metalloprotease MJ0611 (191 aa).

A helical transmembrane segment spans residues alanine 20 to isoleucine 40. Histidine 49 provides a ligand contact to Zn(2+). Glutamate 50 is an active-site residue. Residue histidine 53 participates in Zn(2+) binding. 4 helical membrane passes run leucine 73–valine 93, leucine 110–phenylalanine 130, glycine 133–phenylalanine 153, and proline 171–tryptophan 191.

Belongs to the peptidase M50B family. Zn(2+) is required as a cofactor.

It localises to the cell membrane. This Methanocaldococcus jannaschii (strain ATCC 43067 / DSM 2661 / JAL-1 / JCM 10045 / NBRC 100440) (Methanococcus jannaschii) protein is Putative zinc metalloprotease MJ0611.